We begin with the raw amino-acid sequence, 258 residues long: MHISSTLAVPDTADTPHHVAIIMDGNGRWATERHLPRMAGHSRGLDAVRAAVQAADHRGVRYLTLFAFSSENWRRPAEEISFLMKLFMTALRREVSKLNDSGIRLRVVGDLSAFSPRIQLMIREAEAKTATNPGLTVTIAANYGGRWDILQAMRALVADQPDIAPEAITEEALSPYMALAYASEPDLFIRTGGEQRISNFMLWQLAYSELYFTERYWPDFDAAEMDRAFAWYRNRERRFGRTSAQLEPGTAPALSAGA.

The active site involves Asp24. A Mg(2+)-binding site is contributed by Asp24. Substrate-binding positions include 25–28 (GNGR), Trp29, Arg37, His41, and 69–71 (SSE). Asn72 (proton acceptor) is an active-site residue. Substrate-binding positions include Trp73, Arg75, Arg190, and 196–198 (RIS). Glu209 contacts Mg(2+).

It belongs to the UPP synthase family. As to quaternary structure, homodimer. The cofactor is Mg(2+).

In terms of biological role, catalyzes the condensation of isopentenyl diphosphate (IPP) with allylic pyrophosphates generating different type of terpenoids. This is Isoprenyl transferase from Ralstonia nicotianae (strain ATCC BAA-1114 / GMI1000) (Ralstonia solanacearum).